Here is a 318-residue protein sequence, read N- to C-terminus: NADH-ubiquinone oxidoreductase chain 1 (318 aa).

A run of 8 helical transmembrane segments spans residues 3 to 23 (TMNLLLLIMSTLAAMAFLTLV), 69 to 89 (ILYITAPALAFSIALLLWTPL), 98 to 118 (FNLGLLFILATSSLTVYSILW), 135 to 155 (AVAQMISYEVTLSIILLSILL), 171 to 191 (HLWLILPSWPLAMMWFTSTLA), 217 to 237 (AGPFALFFMAEYMNIIMMNAL), 253 to 273 (ELFTTSFTIKTLLLTSLFLWI), and 294 to 314 (LPLTLALLMWSTSMPIAISSI).

This sequence belongs to the complex I subunit 1 family. Core subunit of respiratory chain NADH dehydrogenase (Complex I) which is composed of 45 different subunits.

It localises to the mitochondrion inner membrane. It catalyses the reaction a ubiquinone + NADH + 5 H(+)(in) = a ubiquinol + NAD(+) + 4 H(+)(out). In terms of biological role, core subunit of the mitochondrial membrane respiratory chain NADH dehydrogenase (Complex I) which catalyzes electron transfer from NADH through the respiratory chain, using ubiquinone as an electron acceptor. Essential for the catalytic activity and assembly of complex I. This Papio hamadryas (Hamadryas baboon) protein is NADH-ubiquinone oxidoreductase chain 1 (MT-ND1).